Consider the following 539-residue polypeptide: Chaperonin GroEL (539 aa).

ATP contacts are provided by residues 29–32 (TLGP), 86–90 (DGTTT), Gly-413, 476–478 (NAA), and Asp-492.

This sequence belongs to the chaperonin (HSP60) family. In terms of assembly, forms a cylinder of 14 subunits composed of two heptameric rings stacked back-to-back. Interacts with the co-chaperonin GroES.

It is found in the cytoplasm. It carries out the reaction ATP + H2O + a folded polypeptide = ADP + phosphate + an unfolded polypeptide.. Its function is as follows. Together with its co-chaperonin GroES, plays an essential role in assisting protein folding. The GroEL-GroES system forms a nano-cage that allows encapsulation of the non-native substrate proteins and provides a physical environment optimized to promote and accelerate protein folding. This Streptococcus thermophilus (strain CNRZ 1066) protein is Chaperonin GroEL.